We begin with the raw amino-acid sequence, 223 residues long: MAEEADLLGQDSDGDSEEVILTPAELIDRLEQAWMNEKFAPELLENKSEIVECVMEQLEHMEENLKRAKKGDLKVSIHQMEMERIRFVLSSYLRCRLMKIEKFFPHTLEKEKTRREEEPPILSPEELVFAKEFLANTETYLKDTALKHMPPNLQKVDLLRTVPKPDLDAYVFLRVKERQENILVEPENDEQRDYVIDLEEGSQHLMRYRTVAPLVASGAIQLI.

An N-acetylmethionine modification is found at methionine 1. Phosphoserine occurs at positions 12 and 16. The tract at residues 166 to 223 (DLDAYVFLRVKERQENILVEPENDEQRDYVIDLEEGSQHLMRYRTVAPLVASGAIQLI) is important for GINS complex assembly.

Belongs to the GINS4/SLD5 family. Component of the CMG helicase complex, a hexameric ring of related MCM2-7 subunits stabilized by CDC45 and the tetrameric GINS complex. Associated with ORC2. Interacts with HELB.

The protein localises to the nucleus. The protein resides in the chromosome. Required for initiation of chromosomal DNA replication. Core component of CDC45-MCM-GINS (CMG) helicase, the molecular machine that unwinds template DNA during replication, and around which the replisome is built. In Bos taurus (Bovine), this protein is DNA replication complex GINS protein SLD5 (GINS4).